The sequence spans 505 residues: 6-phosphofructo-2-kinase/fructose-2,6-bisphosphatase 2 (505 aa).

The segment at 1–20 is disordered; sequence MSGASSSEQNNNSYETKTPN. N-acetylserine is present on Ser-2. Residues 2 to 248 are 6-phosphofructo-2-kinase; the sequence is SGASSSEQNN…VYYLMNIHVQ (247 aa). At Ser-29 the chain carries Phosphoserine; by PKA. 45 to 53 is a binding site for ATP; the sequence is GLPARGKTY. 2 residues coordinate beta-D-fructose 6-phosphate: Arg-78 and Arg-102. Asp-128 is a catalytic residue. Positions 130 and 136 each coordinate beta-D-fructose 6-phosphate. The active site involves Cys-158. 167–172 lines the ATP pocket; it reads NILEVK. 3 residues coordinate beta-D-fructose 6-phosphate: Lys-172, Arg-193, and Tyr-197. Residues 249-505 form a fructose-2,6-bisphosphatase region; sequence PRTIYLCRHG…RAQDMQEGAD (257 aa). Arg-256 serves as a coordination point for beta-D-fructose 2,6-bisphosphate. Catalysis depends on His-257, which acts as the Tele-phosphohistidine intermediate. The beta-D-fructose 2,6-bisphosphate site is built by Asn-263 and Gly-269. The Proton donor/acceptor role is filled by Glu-326. 6 residues coordinate beta-D-fructose 2,6-bisphosphate: Tyr-337, Arg-351, Lys-355, Tyr-366, Gln-392, and Arg-396. 348–351 lines the ATP pocket; that stretch reads FALR. Residues 392–396 and Tyr-428 contribute to the ATP site; that span reads QAVMR. The interval 445 to 505 is disordered; sequence HRDKPTNNFP…RAQDMQEGAD (61 aa). Positions 450–476 are enriched in polar residues; the sequence is TNNFPKNQTPVRMRRNSFTPLSSSNTI. Ser-466 bears the Phosphoserine; by AMPK mark. A phosphothreonine mark is found at Thr-468 and Thr-475. Ser-483 carries the phosphoserine; by BRAF modification. Phosphoserine occurs at positions 486 and 493.

It in the C-terminal section; belongs to the phosphoglycerate mutase family. In terms of assembly, homodimer. Forms a heterodimer with PFKFB3. Post-translationally, phosphorylation by AMPK stimulates activity. In terms of tissue distribution, heart.

It carries out the reaction beta-D-fructose 2,6-bisphosphate + H2O = beta-D-fructose 6-phosphate + phosphate. The catalysed reaction is beta-D-fructose 6-phosphate + ATP = beta-D-fructose 2,6-bisphosphate + ADP + H(+). Phosphorylation results in the activation of the kinase activity. Synthesis and degradation of fructose 2,6-bisphosphate. This chain is 6-phosphofructo-2-kinase/fructose-2,6-bisphosphatase 2, found in Homo sapiens (Human).